The sequence spans 202 residues: Probable nicotinate-nucleotide adenylyltransferase (202 aa).

Belongs to the NadD family.

The enzyme catalyses nicotinate beta-D-ribonucleotide + ATP + H(+) = deamido-NAD(+) + diphosphate. It participates in cofactor biosynthesis; NAD(+) biosynthesis; deamido-NAD(+) from nicotinate D-ribonucleotide: step 1/1. In terms of biological role, catalyzes the reversible adenylation of nicotinate mononucleotide (NaMN) to nicotinic acid adenine dinucleotide (NaAD). This is Probable nicotinate-nucleotide adenylyltransferase from Clostridium perfringens (strain ATCC 13124 / DSM 756 / JCM 1290 / NCIMB 6125 / NCTC 8237 / Type A).